Here is a 356-residue protein sequence, read N- to C-terminus: Ferrochelatase (356 aa).

2 residues coordinate Fe cation: histidine 214 and glutamate 295.

The protein belongs to the ferrochelatase family.

The protein localises to the cytoplasm. The catalysed reaction is heme b + 2 H(+) = protoporphyrin IX + Fe(2+). Its pathway is porphyrin-containing compound metabolism; protoheme biosynthesis; protoheme from protoporphyrin-IX: step 1/1. Catalyzes the ferrous insertion into protoporphyrin IX. This chain is Ferrochelatase, found in Paraburkholderia xenovorans (strain LB400).